The chain runs to 337 residues: Hsp90 co-chaperone Cdc37-like 1 (337 aa).

Over residues 1 to 11 the composition is skewed to pro residues; it reads MEQPWPPPGPW. A disordered region spans residues 1 to 43; it reads MEQPWPPPGPWSLPRAEGEAEEESDLDLSPGSPRCPQLPGGGT. Residues 2–171 are self-association; sequence EQPWPPPGPW…HEQKIRHFGM (170 aa). 2 positions are modified to phosphoserine: Ser32 and Ser88. Residues 84–122 adopt a coiled-coil conformation; it reads HNSESLDQEHAKAQTAISELRQREEEWRQKEEALVQRER. The tract at residues 147–277 is self-association and interaction with Hsp90; it reads KETEDEDKSK…SRVRLYSQSP (131 aa). Residues 267-337 are interaction with Hsp70; the sequence is KSRVRLYSQS…DDEPKMMDTV (71 aa). Residues 278 to 337 are required for interaction with STIP1; the sequence is NFQPVTVQNHVPHSGVGSIGLLESLPQNPDYLQYSINTALCSLNSVVHKEDDEPKMMDTV.

This sequence belongs to the CDC37 family. In terms of assembly, self-associates. Forms complexes with Hsp70 and Hsp90. Interacts with CDC37, FKBP4, PPID and STIP1.

The protein resides in the cytoplasm. Co-chaperone that binds to numerous proteins and promotes their interaction with Hsp70 and Hsp90. The chain is Hsp90 co-chaperone Cdc37-like 1 (CDC37L1) from Bos taurus (Bovine).